The sequence spans 64 residues: Large ribosomal subunit protein bL35 (64 aa).

Belongs to the bacterial ribosomal protein bL35 family.

The chain is Large ribosomal subunit protein bL35 from Acinetobacter baumannii (strain AB307-0294).